The sequence spans 89 residues: Small ribosomal subunit protein uS15 (89 aa).

The protein belongs to the universal ribosomal protein uS15 family. As to quaternary structure, part of the 30S ribosomal subunit. Forms a bridge to the 50S subunit in the 70S ribosome, contacting the 23S rRNA.

Its function is as follows. One of the primary rRNA binding proteins, it binds directly to 16S rRNA where it helps nucleate assembly of the platform of the 30S subunit by binding and bridging several RNA helices of the 16S rRNA. Functionally, forms an intersubunit bridge (bridge B4) with the 23S rRNA of the 50S subunit in the ribosome. The sequence is that of Small ribosomal subunit protein uS15 from Streptococcus agalactiae serotype Ia (strain ATCC 27591 / A909 / CDC SS700).